The following is a 689-amino-acid chain: Beta-adrenergic receptor kinase 1 (689 aa).

The tract at residues 1–190 (MADLEAVLAD…ELNIHLTMND (190 aa)) is N-terminal. The region spanning 54–175 (TFEKIFSQKL…IESDKFTRFC (122 aa)) is the RGS domain. One can recognise a Protein kinase domain in the interval 191-453 (FSVHRIIGRG…AQEVKESPFF (263 aa)). Residues 197–205 (IGRGGFGEV) and Lys220 each bind ATP. Asp317 acts as the Proton acceptor in catalysis. Positions 454-521 (RSLDWQMVFL…TISERWQQEV (68 aa)) constitute an AGC-kinase C-terminal domain. A PH domain is found at 558 to 652 (DCIVHGYMSK…WKKELRDAYR (95 aa)). Residue Ser670 is modified to Phosphoserine.

This sequence belongs to the protein kinase superfamily. AGC Ser/Thr protein kinase family. GPRK subfamily. In terms of assembly, interacts with the heterodimer formed by GNB1 and GNG2. Interacts with GIT1. Interacts with, and phosphorylates chemokine-stimulated CCR5. Interacts with ARRB1. Interacts with LPAR1 and LPAR2. Interacts with RALA in response to LPAR1 activation. ADRBK1 and RALA mutually inhibit each other's binding to LPAR1. Interacts with ADRB2.

The protein resides in the cytoplasm. Its subcellular location is the cell membrane. It localises to the postsynapse. The protein localises to the presynapse. It catalyses the reaction [beta-adrenergic receptor] + ATP = [beta-adrenergic receptor]-phosphate + ADP + H(+). In contrast to other AGC family kinases, the catalytic activity is solely regulated by the binding of substrates and ligands, not by phosphorylation of the kinase domain. In terms of biological role, specifically phosphorylates the agonist-occupied form of the beta-adrenergic and closely related receptors, probably inducing a desensitization of them. Key regulator of LPAR1 signaling. Competes with RALA for binding to LPAR1 thus affecting the signaling properties of the receptor. Desensitizes LPAR1 and LPAR2 in a phosphorylation-independent manner. Positively regulates ciliary smoothened (SMO)-dependent Hedgehog (Hh) signaling pathway by facilitating the trafficking of SMO into the cilium and the stimulation of SMO activity. Inhibits relaxation of airway smooth muscle in response to blue light. This Mus musculus (Mouse) protein is Beta-adrenergic receptor kinase 1.